The chain runs to 360 residues: Protein Wnt-2 (360 aa).

Positions methionine 1–serine 25 are cleaved as a signal peptide. 11 disulfides stabilise this stretch: cysteine 76-cysteine 87, cysteine 127-cysteine 135, cysteine 137-cysteine 157, cysteine 206-cysteine 220, cysteine 208-cysteine 215, cysteine 278-cysteine 309, cysteine 294-cysteine 304, cysteine 308-cysteine 348, cysteine 324-cysteine 339, cysteine 326-cysteine 336, and cysteine 331-cysteine 332. Serine 212 carries the O-palmitoleoyl serine; by PORCN lipid modification. Asparagine 295 carries an N-linked (GlcNAc...) asparagine glycan.

Belongs to the Wnt family. Post-translationally, palmitoleoylation is required for efficient binding to frizzled receptors. Depalmitoleoylation leads to Wnt signaling pathway inhibition.

Its subcellular location is the secreted. It is found in the extracellular space. The protein localises to the extracellular matrix. Functionally, ligand for members of the frizzled family of seven transmembrane receptors. Functions in the canonical Wnt signaling pathway that results in activation of transcription factors of the TCF/LEF family. Functions as a upstream regulator of FGF10 expression. Plays an important role in embryonic lung development. May contribute to embryonic brain development by regulating the proliferation of dopaminergic precursors and neurons. The protein is Protein Wnt-2 (WNT2) of Loxodonta africana (African elephant).